Consider the following 166-residue polypeptide: Replication restart protein DnaT (166 aa).

This sequence belongs to the DnaT family. As to quaternary structure, homooligomerizes. Interacts with PriB. Component of the replication restart primosome. Primosome assembly occurs via a 'hand-off' mechanism. PriA binds to replication forks, subsequently PriB then DnaT bind; DnaT then displaces ssDNA to generate the helicase loading substrate.

Functionally, involved in the restart of stalled replication forks, which reloads the replicative helicase on sites other than the origin of replication. Can function in multiple replication restart pathways. Displaces ssDNA from a PriB-ssDNA complex. Probably forms a spiral filament on ssDNA. The chain is Replication restart protein DnaT from Buchnera aphidicola subsp. Schizaphis graminum (strain Sg).